Consider the following 120-residue polypeptide: Large ribosomal subunit protein bL17 (120 aa).

It belongs to the bacterial ribosomal protein bL17 family. As to quaternary structure, part of the 50S ribosomal subunit. Contacts protein L32.

In Geobacillus thermodenitrificans (strain NG80-2), this protein is Large ribosomal subunit protein bL17.